We begin with the raw amino-acid sequence, 546 residues long: uncharacterized protein (546 aa).

Disordered regions lie at residues 37–101 (KEND…NQKL), 269–300 (QNKA…QPEV), and 392–443 (LSDL…TSAC). Composition is skewed to basic and acidic residues over residues 81-93 (DDVK…ENNQ) and 274-283 (ADLRKTESHG). The segment covering 284–298 (THSQSTPPQHSSSQP) has biased composition (low complexity).

This is an uncharacterized protein from Homo sapiens (Human).